Reading from the N-terminus, the 514-residue chain is 2-isopropylmalate synthase (514 aa).

Residues 5–268 (LIIFDTTLRD…DVGIDTSQIV (264 aa)) enclose the Pyruvate carboxyltransferase domain. Mn(2+) contacts are provided by Asp14, His202, His204, and Asn239. The tract at residues 395 to 514 (KFVSLSQRSE…KDDKVNPQRS (120 aa)) is regulatory domain.

The protein belongs to the alpha-IPM synthase/homocitrate synthase family. LeuA type 1 subfamily. Homodimer. Requires Mn(2+) as cofactor.

The protein localises to the cytoplasm. It catalyses the reaction 3-methyl-2-oxobutanoate + acetyl-CoA + H2O = (2S)-2-isopropylmalate + CoA + H(+). Its pathway is amino-acid biosynthesis; L-leucine biosynthesis; L-leucine from 3-methyl-2-oxobutanoate: step 1/4. Catalyzes the condensation of the acetyl group of acetyl-CoA with 3-methyl-2-oxobutanoate (2-ketoisovalerate) to form 3-carboxy-3-hydroxy-4-methylpentanoate (2-isopropylmalate). This is 2-isopropylmalate synthase from Burkholderia cenocepacia (strain ATCC BAA-245 / DSM 16553 / LMG 16656 / NCTC 13227 / J2315 / CF5610) (Burkholderia cepacia (strain J2315)).